Consider the following 68-residue polypeptide: DNA-directed RNA polymerase subunit omega (68 aa).

Belongs to the RNA polymerase subunit omega family. The RNAP catalytic core consists of 2 alpha, 1 beta, 1 beta' and 1 omega subunit. When a sigma factor is associated with the core the holoenzyme is formed, which can initiate transcription.

It carries out the reaction RNA(n) + a ribonucleoside 5'-triphosphate = RNA(n+1) + diphosphate. Its function is as follows. Promotes RNA polymerase assembly. Latches the N- and C-terminal regions of the beta' subunit thereby facilitating its interaction with the beta and alpha subunits. The sequence is that of DNA-directed RNA polymerase subunit omega from Geobacter sp. (strain M21).